Here is a 967-residue protein sequence, read N- to C-terminus: MSLFNHLLSRALPLWLLFFINFLVLLGKSQQEVLQVQVGIVLDTNATLAALSLRAINMSLSEFYNTHNGFKTRIVLNIRDSKRTVVGAAASALYLIKKREVVAIIGPGNSMQAPFLINLGNQSQVPIISFSASSPVLDSLRSPYFIRATHDDSSQVHAISAIIESFRWREVVPIYADNEFGEGILPYLVDAFQEINVRIRYRSAISVHSTDDLVKKELYKLMTMPTRVFIVHMLPDLGSRLFSIAKEIGMMTKGYVWIVTNGIADQMSVMGESSLENMHGVLGVKTYFSRSKELMYLETRWRKRFGGEELNNFECWGYDTATALAMSIEEISSNVNMSFSQTKRNTSRDDTGTDLDDLSFALSGPKLLQALATVSFKGVAGRFQLKNGKLEATTFKIVNIEESGERTVGFWKSKVGLVKSLRVNQTGIKISHSSHRLRPIIWPGDTIFVPKGWEFPTNAKKLRIAVPKKDGFNNFVEVTKDANTNAPTITGFCIDVFDTAMRQMPYAVPYEYIPFETPDGKPRGSYDEMVYHVFLGEFDGAVGDTTILANRSTYVDFALPYSETGIVVVVPVKDEREKGKWVFLKPLTRELWFLTAASFLYIGIMVWIFEYQASGDFRKQSIINKISNVFYFSFSTLFFAHMRPSESIFTRVLVVVWCFVLLILTQSYTATLTSMLTVQELRPTVRHMDDLRNSGVNIGYQTGSFTFERLKQMGYKESRLKTYDTPQEMHELFLKKSSNGGIDAAFDEVAYVKLFMAKYCSKYTIIEPTFKADGFGFAFPLGSPLVPDLSRQILNITEGETMKAIENKWLLGEKHCLDSTTSDSPIRLDHHSFEALFTIVFVVSMLLLLAMLVCRRYRQESKSGEINANNSPTDGNMRAPPNQPTDDNMRAPTSPPIDDQVLEPPGPALNEADDQDQLLNDEVNVGDRNEVDIIVEVDPTLVHRRNLITSKTIPTRRAALFSRIKSA.

A signal peptide spans 1-31; that stretch reads MSLFNHLLSRALPLWLLFFINFLVLLGKSQQ. Topologically, residues 32–590 are extracellular; it reads EVLQVQVGIV…WVFLKPLTRE (559 aa). N-linked (GlcNAc...) asparagine glycosylation is found at Asn45, Asn57, Asn121, Asn336, Asn345, Asn424, and Asn550. Residues 591-611 traverse the membrane as a helical segment; it reads LWFLTAASFLYIGIMVWIFEY. At 612-621 the chain is on the cytoplasmic side; the sequence is QASGDFRKQS. Residues 622–642 traverse the membrane as a helical segment; that stretch reads IINKISNVFYFSFSTLFFAHM. Topologically, residues 643–651 are cytoplasmic; that stretch reads RPSESIFTR. Residues 652-672 form a helical membrane-spanning segment; it reads VLVVVWCFVLLILTQSYTATL. Residues 673–832 are Extracellular-facing; that stretch reads TSMLTVQELR…DSPIRLDHHS (160 aa). N-linked (GlcNAc...) asparagine glycosylation occurs at Asn795. The chain crosses the membrane as a helical span at residues 833–853; it reads FEALFTIVFVVSMLLLLAMLV. Topologically, residues 854-967 are cytoplasmic; sequence CRRYRQESKS…AALFSRIKSA (114 aa). Positions 864-874 are enriched in polar residues; the sequence is GEINANNSPTD. The interval 864–913 is disordered; sequence GEINANNSPTDGNMRAPPNQPTDDNMRAPTSPPIDDQVLEPPGPALNEAD.

Belongs to the glutamate-gated ion channel (TC 1.A.10.1) family. As to quaternary structure, may form heteromers. In terms of tissue distribution, expressed predominantly in roots.

The protein resides in the membrane. Glutamate-gated receptor that probably acts as a non-selective cation channel. May be involved in light-signal transduction and calcium homeostasis via the regulation of calcium influx into cells. This is Glutamate receptor 2.6 (GLR2.6) from Arabidopsis thaliana (Mouse-ear cress).